We begin with the raw amino-acid sequence, 24 residues long: Prokineticin 1-like protein (24 aa).

A disulfide bridge links Cys7 with Cys19.

In terms of tissue distribution, expressed by the skin glands.

The protein localises to the secreted. Stimulates insulin secretion by BRIN-BD11 cells in vitro. This chain is Prokineticin 1-like protein, found in Pelophylax saharicus (Sahara frog).